Reading from the N-terminus, the 381-residue chain is Alkanesulfonate monooxygenase (381 aa).

It belongs to the SsuD family. Homotetramer.

It carries out the reaction an alkanesulfonate + FMNH2 + O2 = an aldehyde + FMN + sulfite + H2O + 2 H(+). In terms of biological role, catalyzes the desulfonation of aliphatic sulfonates. This Enterobacter sp. (strain 638) protein is Alkanesulfonate monooxygenase.